The chain runs to 217 residues: Orotate phosphoribosyltransferase (217 aa).

Lys-26 contributes to the 5-phospho-alpha-D-ribose 1-diphosphate binding site. 34–35 (FF) is an orotate binding site. Residues 72–73 (YK), Arg-99, Lys-100, Lys-103, His-105, and 124–132 (DDVITAGTA) each bind 5-phospho-alpha-D-ribose 1-diphosphate. Residues Thr-128 and Arg-156 each coordinate orotate.

This sequence belongs to the purine/pyrimidine phosphoribosyltransferase family. PyrE subfamily. In terms of assembly, homodimer. Mg(2+) serves as cofactor.

The enzyme catalyses orotidine 5'-phosphate + diphosphate = orotate + 5-phospho-alpha-D-ribose 1-diphosphate. It functions in the pathway pyrimidine metabolism; UMP biosynthesis via de novo pathway; UMP from orotate: step 1/2. Functionally, catalyzes the transfer of a ribosyl phosphate group from 5-phosphoribose 1-diphosphate to orotate, leading to the formation of orotidine monophosphate (OMP). The protein is Orotate phosphoribosyltransferase of Aeromonas salmonicida (strain A449).